Here is a 1966-residue protein sequence, read N- to C-terminus: Histone-lysine N-methyltransferase SETD1B (1966 aa).

Residues 1–12 (MENSHPPHHHHQ) are compositionally biased toward basic residues. The segment at 1 to 26 (MENSHPPHHHHQQPPPQPGPSGERRN) is disordered. The interaction with WDR82 stretch occupies residues 68-98 (VEDPRVVGIWTKNKELELSVPKFKIDEFYVG). Residues 93–181 (DEFYVGPVPP…NIIHVELDTK (89 aa)) enclose the RRM domain. Disordered regions lie at residues 235–302 (GCGS…LFSQ), 357–660 (VGGT…PKPM), 675–719 (LAPT…PPPA), 963–1462 (KVKR…SGPL), 1501–1541 (PPLL…RPPA), 1555–1606 (QPQT…KLPF), and 1636–1668 (AKSR…PQPL). Composition is skewed to polar residues over residues 243–259 (VTPN…TAYS), 265–274 (TPNSYGQGTP), and 282–300 (PFSQ…SYLF). Composition is skewed to pro residues over residues 432-441 (PAPPPLPPAE) and 449-458 (GTPPGPPPPD). The segment covering 493–521 (EKPHDSLDSRIEMLLKEQRTKLLFLREPD) has biased composition (basic and acidic residues). Positions 531-543 (SPISSSSSQLSPL) are enriched in low complexity. Pro residues predominate over residues 592 to 603 (PRPPPEPGPPDP). A compositionally biased stretch (acidic residues) spans 637–646 (EDMEISDDEM). Pro residues predominate over residues 679–719 (LPLPPPPGFPPLPPPPPPPPPQPGFPMPPPLPPPPPPPPPA). Ser-986 and Ser-994 each carry phosphoserine. Residues 995–1015 (ERERDRDMADTPCELAKRDPK) show a composition bias toward basic and acidic residues. Ser-1031 is modified (phosphoserine). Over residues 1041 to 1064 (LSASSSSSASSSSGSSTTSPSSSA) the composition is skewed to low complexity. Acidic residues-rich tracts occupy residues 1067–1087 (KEEE…EEEE) and 1104–1142 (KDDD…EEET). The segment covering 1148-1174 (SKAEATSSSESSESSEFESSSESSPSS) has biased composition (low complexity). The stretch at 1173–1204 (SSSEDEEEVVAREEEEEEEEEEMVAEESMASA) forms a coiled coil. Acidic residues-rich tracts occupy residues 1175-1197 (SEDE…EMVA) and 1229-1238 (GMEEEVDIET). 3 positions are modified to phosphoserine: Ser-1265, Ser-1283, and Ser-1335. A compositionally biased stretch (pro residues) spans 1312–1340 (EPPMMLPLPLQPPLPPPRPPRPPSPPPEP). The segment covering 1383–1425 (PGGEPPLSGGSSGLSLSSPQVPGSPFSYPAPSPSLSSGGLPRT) has biased composition (low complexity). The span at 1501 to 1514 (PPLLPAPLASCPPP) shows a compositional bias: pro residues. Positions 1515–1524 (MKRKPGRPRR) are enriched in basic residues. The span at 1580 to 1600 (PAPPPPLPPQPPPPPPPPPVE) shows a compositional bias: pro residues. 2 positions are modified to phosphoserine: Ser-1659 and Ser-1663. Positions 1745 to 1750 (GCARSE) match the WDR5 interaction motif (WIN) motif. Residues 1767 to 1800 (SRASTDEPPADTQGMSIPAQPHASTRAGSERRSE) are disordered. Positions 1798–1803 (RSEQRR) match the RxxxRR motif motif. An SET domain is found at 1827–1944 (KKLKFCKSHI…VNEEITYDYK (118 aa)). Tyr-1943 lines the S-adenosyl-L-methionine pocket. The 17-residue stretch at 1950 to 1966 (VKIPCLCGSENCRGTLN) folds into the Post-SET domain.

This sequence belongs to the class V-like SAM-binding methyltransferase superfamily. Component of the SET1B/COMPASS complex composed of the catalytic subunit SETD1B, WDR5, WDR82, RBBP5, ASH2L/ASH2, CXXC1/CFP1, HCFC1, DPY30 homotrimer and BOD1. Forms a core complex with the evolutionary conserved subcomplex WRAD composed of WDR5, RBBP5, ASH2L/ASH2 and DPY30 subunits; WRAD differentially stimulates the methyltransferase activity. Interacts with HCFC1 and ASH2L/ASH2. Interacts (via N-terminal region) with WDR82. Interacts (via the RRM domain) with hyperphosphorylated C-terminal domain (CTD) of RNA polymerase II large subunit (POLR2A) only in the presence of WDR82. Binds specifically to CTD heptad repeats phosphorylated on 'Ser-5' of each heptad. Interacts with RBM15. Interacts (via WIN motif) with WDR5.

It is found in the nucleus. It localises to the nucleus speckle. Its subcellular location is the chromosome. The protein localises to the cytoplasm. It carries out the reaction L-lysyl(4)-[histone H3] + S-adenosyl-L-methionine = N(6)-methyl-L-lysyl(4)-[histone H3] + S-adenosyl-L-homocysteine + H(+). The catalysed reaction is N(6)-methyl-L-lysyl(4)-[histone H3] + S-adenosyl-L-methionine = N(6),N(6)-dimethyl-L-lysyl(4)-[histone H3] + S-adenosyl-L-homocysteine + H(+). The enzyme catalyses N(6),N(6)-dimethyl-L-lysyl(4)-[histone H3] + S-adenosyl-L-methionine = N(6),N(6),N(6)-trimethyl-L-lysyl(4)-[histone H3] + S-adenosyl-L-homocysteine + H(+). Histone methyltransferase that catalyzes methyl group transfer from S-adenosyl-L-methionine to the epsilon-amino group of 'Lys-4' of histone H3 (H3K4) via a non-processive mechanism. Part of chromatin remodeling machinery, forms H3K4me1, H3K4me2 and H3K4me3 methylation marks at active chromatin sites where transcription and DNA repair take place. Plays an essential role in regulating the transcriptional programming of multipotent hematopoietic progenitor cells and lymphoid lineage specification during hematopoiesis. The protein is Histone-lysine N-methyltransferase SETD1B (SETD1B) of Homo sapiens (Human).